The sequence spans 167 residues: uncharacterized protein (167 aa).

This sequence to A.thaliana At2g20940.

This is an uncharacterized protein from Schizosaccharomyces pombe (strain 972 / ATCC 24843) (Fission yeast).